The sequence spans 843 residues: Elongation factor 2 (843 aa).

The tr-type G domain maps to 17 to 253; sequence HNIRNMSVIA…LWGENFFDPA (237 aa). 26–33 is a binding site for GTP; sequence AHVDHGKS. 2 positions are modified to phosphothreonine: T57 and T59. Residue 158–161 participates in GTP binding; that stretch reads NKMD. The residue at position 700 (H700) is a Diphthamide.

This sequence belongs to the TRAFAC class translation factor GTPase superfamily. Classic translation factor GTPase family. EF-G/EF-2 subfamily. Post-translationally, phosphorylation by EF-2 kinase completely inactivates EF-2.

It is found in the cytoplasm. It catalyses the reaction GTP + H2O = GDP + phosphate + H(+). Its function is as follows. Catalyzes the GTP-dependent ribosomal translocation step during translation elongation. During this step, the ribosome changes from the pre-translocational (PRE) to the post-translocational (POST) state as the newly formed A-site-bound peptidyl-tRNA and P-site-bound deacylated tRNA move to the P and E sites, respectively. Catalyzes the coordinated movement of the two tRNA molecules, the mRNA and conformational changes in the ribosome. The sequence is that of Elongation factor 2 from Beta vulgaris (Sugar beet).